The following is a 147-amino-acid chain: Ribonuclease VapC43 (147 aa).

A PINc domain is found at 3-139 (CVDVNVLVYA…ARFRRLRWRH (137 aa)). 2 residues coordinate Mg(2+): Asp5 and Asp108.

Belongs to the PINc/VapC protein family. The cofactor is Mg(2+).

In terms of biological role, toxic component of a type II toxin-antitoxin (TA) system. An RNase. Its toxic effect is neutralized by coexpression with cognate antitoxin VapB43. This chain is Ribonuclease VapC43, found in Mycobacterium tuberculosis (strain CDC 1551 / Oshkosh).